A 394-amino-acid polypeptide reads, in one-letter code: Elongation factor Tu (394 aa).

The tr-type G domain occupies 10–205; the sequence is KPHMNVGTIG…TMDNYFDLPE (196 aa). The interval 19-26 is G1; that stretch reads GHVDHGKT. Residue 19 to 26 coordinates GTP; the sequence is GHVDHGKT. Thr-26 lines the Mg(2+) pocket. The segment at 61–65 is G2; sequence GITIN. A G3 region spans residues 82 to 85; it reads DCPG. Residues 82–86 and 137–140 each bind GTP; these read DCPGH and NKLD. The interval 137–140 is G4; it reads NKLD. A G5 region spans residues 173 to 175; the sequence is SAF.

The protein belongs to the TRAFAC class translation factor GTPase superfamily. Classic translation factor GTPase family. EF-Tu/EF-1A subfamily. Monomer.

It localises to the cytoplasm. The catalysed reaction is GTP + H2O = GDP + phosphate + H(+). In terms of biological role, GTP hydrolase that promotes the GTP-dependent binding of aminoacyl-tRNA to the A-site of ribosomes during protein biosynthesis. The protein is Elongation factor Tu of Borrelia duttonii (strain Ly).